A 133-amino-acid polypeptide reads, in one-letter code: Small ribosomal subunit protein uS8 (133 aa).

This sequence belongs to the universal ribosomal protein uS8 family. As to quaternary structure, part of the 30S ribosomal subunit. Contacts proteins S5 and S12.

One of the primary rRNA binding proteins, it binds directly to 16S rRNA central domain where it helps coordinate assembly of the platform of the 30S subunit. This chain is Small ribosomal subunit protein uS8, found in Prochlorococcus marinus (strain MIT 9313).